The primary structure comprises 162 residues: Zinc finger protein ZAT12 (162 aa).

2 C2H2-type zinc fingers span residues 39–61 and 82–104; these read FTCK…RASH and HPCP…MRRH.

In terms of tissue distribution, expressed in roots, stems and flowers.

The protein localises to the nucleus. Its function is as follows. Transcriptional repressor involved in light acclimation, cold and oxidative stress responses. May regulate a collection of transcripts involved in response to high-light, cold and oxidative stress. The polypeptide is Zinc finger protein ZAT12 (ZAT12) (Arabidopsis thaliana (Mouse-ear cress)).